The chain runs to 143 residues: Small ribosomal subunit protein uS11c (143 aa).

This sequence belongs to the universal ribosomal protein uS11 family. As to quaternary structure, part of the 30S ribosomal subunit.

The protein localises to the plastid. It is found in the chloroplast. The chain is Small ribosomal subunit protein uS11c from Cenchrus americanus (Pearl millet).